Here is a 284-residue protein sequence, read N- to C-terminus: MNWTGLYTLLSGVNRHSTAIGRVWLSVIFIFRIMVLVVAAESVWGDEKSSFICNTLQPGCNSVCYDHFFPISHVRLWSLQLILVSTPALLVAMHVAHQQHIEKKMLRLEGHGDPLHLEEVKRHKVHISGTLWWTYVISVVFRLLFEAAFMYVFYLLYPGYAMVRLVKCDAYPCPNTVDCFVSRPTEKTIFTVFMLAASGICIILNVAEVVYLIFRACARRAQRRSNPPSRKGSGGFGHRLSPEYKQNEINKLLSEQDGSLKDILRRSPGTGAGLAEKSDRCSAC.

Over 1 to 22 (MNWTGLYTLLSGVNRHSTAIGR) the chain is Cytoplasmic. Residues 23–45 (VWLSVIFIFRIMVLVVAAESVWG) form a helical membrane-spanning segment. The Extracellular portion of the chain corresponds to 46 to 75 (DEKSSFICNTLQPGCNSVCYDHFFPISHVR). Residues 76–95 (LWSLQLILVSTPALLVAMHV) form a helical membrane-spanning segment. Over 96–130 (AHQQHIEKKMLRLEGHGDPLHLEEVKRHKVHISGT) the chain is Cytoplasmic. The helical transmembrane segment at 131–153 (LWWTYVISVVFRLLFEAAFMYVF) threads the bilayer. Topologically, residues 154–191 (YLLYPGYAMVRLVKCDAYPCPNTVDCFVSRPTEKTIFT) are extracellular. The chain crosses the membrane as a helical span at residues 192 to 214 (VFMLAASGICIILNVAEVVYLIF). The Cytoplasmic portion of the chain corresponds to 215–284 (RACARRAQRR…AEKSDRCSAC (70 aa)). Phosphoserine is present on residues serine 233, serine 259, serine 267, and serine 278.

This sequence belongs to the connexin family. Beta-type (group I) subfamily. In terms of assembly, a connexon is composed of a hexamer of connexins. Interacts with CNST.

It is found in the cell membrane. Its subcellular location is the cell junction. The protein resides in the gap junction. One gap junction consists of a cluster of closely packed pairs of transmembrane channels, the connexons, through which materials of low MW diffuse from one cell to a neighboring cell. This chain is Gap junction beta-1 protein (GJB1), found in Bos taurus (Bovine).